The chain runs to 278 residues: Small ribosomal subunit protein uS2 (278 aa).

Positions 233–258 (IDMEAAGEAPANKGKKKSAKARLDKS) are disordered.

The protein belongs to the universal ribosomal protein uS2 family.

In Bacteroides fragilis (strain ATCC 25285 / DSM 2151 / CCUG 4856 / JCM 11019 / LMG 10263 / NCTC 9343 / Onslow / VPI 2553 / EN-2), this protein is Small ribosomal subunit protein uS2.